A 543-amino-acid chain; its full sequence is Germacrene A synthase (543 aa).

Positions 296, 300, 439, and 447 each coordinate Mg(2+). The DDXXD motif signature appears at 296 to 300 (DDTYD).

Belongs to the terpene synthase family. Tpsa subfamily. Requires Mg(2+) as cofactor. Mn(2+) serves as cofactor. In terms of tissue distribution, barely detectable in leaves.

The protein localises to the plastid. It localises to the chloroplast. The catalysed reaction is (2E,6E)-farnesyl diphosphate = germacrene A + diphosphate. It carries out the reaction (2E,6E)-farnesyl diphosphate = (1S,2S,4R)-beta-elemene + diphosphate. It participates in secondary metabolite biosynthesis; terpenoid biosynthesis. In terms of biological role, sesquiterpene synthase involved in the biosynthesis of volatile compounds widely used in aromatherapy and folk medicine, and present in culinary herbs. Mediates the conversion of (2E,6E)-farnesyl diphosphate (FPP) into germacrene A and beta-elemene. Not able to use (2E)-geranyl diphosphate (GPP) as substrate. In Lavandula viridis (Green lavender), this protein is Germacrene A synthase.